The following is a 361-amino-acid chain: Putative dual-specificity RNA methyltransferase RlmN (361 aa).

Residue glutamate 91 is the Proton acceptor of the active site. Positions glutamine 97–arginine 329 constitute a Radical SAM core domain. [4Fe-4S] cluster-binding residues include cysteine 111, cysteine 115, and cysteine 118. S-adenosyl-L-methionine-binding positions include glycine 163 to glutamate 164, serine 195, serine 218 to histidine 220, and threonine 296.

This sequence belongs to the radical SAM superfamily. RlmN family. [4Fe-4S] cluster is required as a cofactor.

Its subcellular location is the cytoplasm. It catalyses the reaction adenosine(2503) in 23S rRNA + 2 reduced [2Fe-2S]-[ferredoxin] + 2 S-adenosyl-L-methionine = 2-methyladenosine(2503) in 23S rRNA + 5'-deoxyadenosine + L-methionine + 2 oxidized [2Fe-2S]-[ferredoxin] + S-adenosyl-L-homocysteine. The enzyme catalyses adenosine(37) in tRNA + 2 reduced [2Fe-2S]-[ferredoxin] + 2 S-adenosyl-L-methionine = 2-methyladenosine(37) in tRNA + 5'-deoxyadenosine + L-methionine + 2 oxidized [2Fe-2S]-[ferredoxin] + S-adenosyl-L-homocysteine. Its function is as follows. Specifically methylates position 2 of adenine 2503 in 23S rRNA and position 2 of adenine 37 in tRNAs. This is Putative dual-specificity RNA methyltransferase RlmN from Streptococcus pneumoniae (strain CGSP14).